The sequence spans 72 residues: Teretoxin Tan11.1 (72 aa).

A signal peptide spans methionine 1 to leucine 21. Positions proline 22 to arginine 31 are excised as a propeptide.

The protein belongs to the teretoxin H (TH) superfamily. In terms of processing, contains 4 disulfide bonds. Expressed by the venom duct.

It localises to the secreted. The sequence is that of Teretoxin Tan11.1 from Terebra anilis (Auger snail).